Reading from the N-terminus, the 389-residue chain is NAD-dependent protein deacetylase sirtuin-2 (389 aa).

The interval 1-34 is disordered; that stretch reads MAEPDPSHPLETQAGKVQEAQDSDSDSEGGAAGG. Position 2 is an N-acetylalanine (Ala2). Ser23, Ser25, and Ser27 each carry phosphoserine. Positions 41–51 match the Nuclear export signal motif; the sequence is LRNLFSQTLSL. Residue Ser53 is modified to Phosphoserine. Positions 57–338 constitute a Deacetylase sirtuin-type domain; it reads RLLDELTLEG…LALAELLGWK (282 aa). Residues 85–89 and 95–97 contribute to the NAD(+) site; these read AGIST and DFR. Ser100 bears the Phosphoserine mark. 167-170 is a binding site for NAD(+); it reads QNID. The active-site Proton acceptor is the His187. Zn(2+) is bound by residues Cys195 and Cys200. Ser207 is modified (phosphoserine). Zn(2+) contacts are provided by Cys221 and Cys224. NAD(+)-binding positions include 262-263, 286-288, and Cys324; these read TS and NKE. The disordered stretch occupies residues 351 to 389; it reads SIDAQSGAGVPNPSTSASPKKSPPPAKDEARTTEREKPQ. The segment covering 361–370 has biased composition (low complexity); it reads PNPSTSASPK. Phosphoserine; by CDK2 and CDK5 is present on Ser368. Position 372 is a phosphoserine (Ser372). A compositionally biased stretch (basic and acidic residues) spans 376–389; that stretch reads AKDEARTTEREKPQ.

It belongs to the sirtuin family. Class I subfamily. Interacts with CDC20, FOXO3 and FZR1. Associates with microtubules in primary cortical mature neurons. Homotrimer. Isoform 1 and isoform 2 interact (via both phosphorylated, unphosphorylated, active or inactive forms) with HDAC6; the interaction is necessary for the complex to interact with alpha-tubulin, suggesting that these proteins belong to a large complex that deacetylates the cytoskeleton. Interacts with FOXO1; the interaction is disrupted upon serum-starvation or oxidative stress, leading to increased level of acetylated FOXO1 and induction of autophagy. Interacts with RELA; the interaction occurs in the cytoplasm and is increased in a TNF-alpha-dependent manner. Interacts with HOXA10; the interaction is direct. Interacts with YWHAB and YWHAG; the interactions occur in a AKT-dependent manner and increase SIRT2-dependent TP53 deacetylation. Interacts with MAPK1/ERK2 and MAPK3/ERK1; the interactions increase SIRT2 stability and deacetylation activity. Interacts (phosphorylated form) with KMT5A isoform 2; the interaction is direct, stimulates KMT5A-mediated methyltransferase activity on histone at 'Lys-20' (H4K20me1) and is increased in a H(2)O(2)-induced oxidative stress-dependent manner. Interacts with G6PD; the interaction is enhanced by H(2)O(2) treatment. Interacts with a G1/S-specific cyclin E-CDK2 complex. Interacts with AURKA, CDK5R1 (p35 form) and CDK5 and HIF1A. Isoform 1, isoform 2 and isoform 5 interact (via C-terminus region) with EP300. Interacts with the tRNA ligase SARS1; recruited to the VEGFA promoter via interaction with SARS1. Interacts with BEX4; negatively regulates alpha-tubulin deacetylation by SIRT2. Zn(2+) is required as a cofactor. In terms of processing, phosphorylated at phosphoserine and phosphothreonine. Phosphorylated at Ser-368 by a mitotic kinase CDK1/cyclin B at the G2/M transition; phosphorylation regulates the delay in cell-cycle progression. Phosphorylated at Ser-368 by a mitotic kinase G1/S-specific cyclin E/Cdk2 complex; phosphorylation inactivates SIRT2-mediated alpha-tubulin deacetylation and thereby negatively regulates cell adhesion, cell migration and neurite outgrowth during neuronal differentiation. Phosphorylated by cyclin A/Cdk2 and p35-Cdk5 complexes and to a lesser extent by the cyclin D3/Cdk4 and cyclin B/Cdk1, in vitro. Dephosphorylated at Ser-368 by CDC14A and CDC14B around early anaphase. Post-translationally, acetylated by EP300; acetylation leads both to the decreased of SIRT2-mediated alpha-tubulin deacetylase activity and SIRT2-mediated down-regulation of TP53 transcriptional activity. Ubiquitinated. Isoform 1 is expressed in heart, liver and skeletal muscle, weakly expressed in the cortex. Isoform 2 is strongly expressed in the cortex, weakly expressed in heart and liver. Weakly expressed in several malignancies including breast, liver, brain, kidney and prostate cancers compared to normal tissues. Weakly expressed in glioma cell lines compared to normal brain tissues (at protein level). Widely expressed. Highly expressed in heart, brain and skeletal muscle, while it is weakly expressed in placenta and lung. Down-regulated in many gliomas suggesting that it may act as a tumor suppressor gene in human gliomas possibly through the regulation of microtubule network.

It is found in the nucleus. The protein localises to the cytoplasm. The protein resides in the perinuclear region. Its subcellular location is the cytoskeleton. It localises to the microtubule organizing center. It is found in the centrosome. The protein localises to the centriole. The protein resides in the spindle. Its subcellular location is the midbody. It localises to the chromosome. It is found in the perikaryon. The protein localises to the cell projection. The protein resides in the growth cone. Its subcellular location is the myelin membrane. It carries out the reaction N(6)-acetyl-L-lysyl-[protein] + NAD(+) + H2O = 2''-O-acetyl-ADP-D-ribose + nicotinamide + L-lysyl-[protein]. The enzyme catalyses N(6)-tetradecanoyl-L-lysyl-[protein] + NAD(+) + H2O = 2''-O-tetradecanoyl-ADP-D-ribose + nicotinamide + L-lysyl-[protein]. The catalysed reaction is N(6)-hexadecanoyl-L-lysyl-[protein] + NAD(+) + H2O = 2''-O-hexadecanoyl-ADP-D-ribose + nicotinamide + L-lysyl-[protein]. Its activity is regulated as follows. Inhibited by Sirtinol, A3 and M15 small molecules. Inhibited by nicotinamide. Inhibited by a macrocyclic peptide inhibitor S2iL5. Inhibited by EP300-induced acetylation. Functionally, NAD-dependent protein deacetylase, which deacetylates internal lysines on histone and alpha-tubulin as well as many other proteins such as key transcription factors. Participates in the modulation of multiple and diverse biological processes such as cell cycle control, genomic integrity, microtubule dynamics, cell differentiation, metabolic networks, and autophagy. Plays a major role in the control of cell cycle progression and genomic stability. Functions in the antephase checkpoint preventing precocious mitotic entry in response to microtubule stress agents, and hence allowing proper inheritance of chromosomes. Positively regulates the anaphase promoting complex/cyclosome (APC/C) ubiquitin ligase complex activity by deacetylating CDC20 and FZR1, then allowing progression through mitosis. Associates both with chromatin at transcriptional start sites (TSSs) and enhancers of active genes. Plays a role in cell cycle and chromatin compaction through epigenetic modulation of the regulation of histone H4 'Lys-20' methylation (H4K20me1) during early mitosis. Specifically deacetylates histone H4 at 'Lys-16' (H4K16ac) between the G2/M transition and metaphase enabling H4K20me1 deposition by KMT5A leading to ulterior levels of H4K20me2 and H4K20me3 deposition throughout cell cycle, and mitotic S-phase progression. Deacetylates KMT5A modulating KMT5A chromatin localization during the mitotic stress response. Also deacetylates histone H3 at 'Lys-57' (H3K56ac) during the mitotic G2/M transition. Upon bacterium Listeria monocytogenes infection, deacetylates 'Lys-18' of histone H3 in a receptor tyrosine kinase MET- and PI3K/Akt-dependent manner, thereby inhibiting transcriptional activity and promoting late stages of listeria infection. During oocyte meiosis progression, may deacetylate histone H4 at 'Lys-16' (H4K16ac) and alpha-tubulin, regulating spindle assembly and chromosome alignment by influencing microtubule dynamics and kinetochore function. Deacetylates histone H4 at 'Lys-16' (H4K16ac) at the VEGFA promoter and thereby contributes to regulate expression of VEGFA, a key regulator of angiogenesis. Deacetylates alpha-tubulin at 'Lys-40' and hence controls neuronal motility, oligodendroglial cell arbor projection processes and proliferation of non-neuronal cells. Phosphorylation at Ser-368 by a G1/S-specific cyclin E-CDK2 complex inactivates SIRT2-mediated alpha-tubulin deacetylation, negatively regulating cell adhesion, cell migration and neurite outgrowth during neuronal differentiation. Deacetylates PARD3 and participates in the regulation of Schwann cell peripheral myelination formation during early postnatal development and during postinjury remyelination. Involved in several cellular metabolic pathways. Plays a role in the regulation of blood glucose homeostasis by deacetylating and stabilizing phosphoenolpyruvate carboxykinase PCK1 activity in response to low nutrient availability. Acts as a key regulator in the pentose phosphate pathway (PPP) by deacetylating and activating the glucose-6-phosphate G6PD enzyme, and therefore, stimulates the production of cytosolic NADPH to counteract oxidative damage. Maintains energy homeostasis in response to nutrient deprivation as well as energy expenditure by inhibiting adipogenesis and promoting lipolysis. Attenuates adipocyte differentiation by deacetylating and promoting FOXO1 interaction to PPARG and subsequent repression of PPARG-dependent transcriptional activity. Plays a role in the regulation of lysosome-mediated degradation of protein aggregates by autophagy in neuronal cells. Deacetylates FOXO1 in response to oxidative stress or serum deprivation, thereby negatively regulating FOXO1-mediated autophagy. Deacetylates a broad range of transcription factors and co-regulators regulating target gene expression. Deacetylates transcriptional factor FOXO3 stimulating the ubiquitin ligase SCF(SKP2)-mediated FOXO3 ubiquitination and degradation. Deacetylates HIF1A and therefore promotes HIF1A degradation and inhibition of HIF1A transcriptional activity in tumor cells in response to hypoxia. Deacetylates RELA in the cytoplasm inhibiting NF-kappaB-dependent transcription activation upon TNF-alpha stimulation. Inhibits transcriptional activation by deacetylating p53/TP53 and EP300. Also deacetylates EIF5A. Functions as a negative regulator on oxidative stress-tolerance in response to anoxia-reoxygenation conditions. Plays a role as tumor suppressor. In addition to protein deacetylase activity, also has activity toward long-chain fatty acyl groups and mediates protein-lysine demyristoylation and depalmitoylation of target proteins, such as ARF6 and KRAS, thereby regulating their association with membranes. Its function is as follows. Deacetylates EP300, alpha-tubulin and histone H3 and H4. Lacks deacetylation activity, at least toward known SIRT2 targets. The sequence is that of NAD-dependent protein deacetylase sirtuin-2 (SIRT2) from Homo sapiens (Human).